The chain runs to 223 residues: MNVKIKKLHNWDMTPTEAILLQRELAQKVSACGTLSSISLVAGADVWHSRTSGMGRAAVVVLSYPDMNLVEVSRSEGDCHIPYIPGLLSFREMPLLLSAFEGLESMPDLILMDGQGLAHPRRLGIASHLGLFLNKPVIGCAKSRLVGEYTPLADEAGSYSDLYHNSQLVGRVLRTRRGVNPLFISVGHKICLEEACSRVADCCRGYRLPEPLRHAHLAAAELI.

Positions 45 and 113 each coordinate Mg(2+).

The protein belongs to the endonuclease V family. It depends on Mg(2+) as a cofactor.

It localises to the cytoplasm. The catalysed reaction is Endonucleolytic cleavage at apurinic or apyrimidinic sites to products with a 5'-phosphate.. DNA repair enzyme involved in the repair of deaminated bases. Selectively cleaves double-stranded DNA at the second phosphodiester bond 3' to a deoxyinosine leaving behind the intact lesion on the nicked DNA. The chain is Endonuclease V from Dehalococcoides mccartyi (strain ATCC BAA-2100 / JCM 16839 / KCTC 5957 / BAV1).